Here is a 285-residue protein sequence, read N- to C-terminus: MARCO-like protein (285 aa).

Residues 1–20 (MRAFIFFLFMLLAMFSASST) form the signal peptide. Asn24 carries N-linked (GlcNAc...) asparagine glycosylation. Disordered stretches follow at residues 47-77 (NHLG…GQPG) and 91-285 (GRAG…QGNL). 2 stretches are compositionally biased toward polar residues: residues 57-67 (KQGGSYTQGNP) and 105-114 (SGKSNQKGNP). Positions 115-128 (ESSNKQENSGSSSQ) are enriched in low complexity. Over residues 134–145 (ISTQQGNPGSSD) the composition is skewed to polar residues. The span at 160 to 173 (GSSSQQGKPGSSSQ) shows a compositional bias: low complexity. Positions 174–185 (HGNLGSSTQKGN) are enriched in polar residues. A compositionally biased stretch (low complexity) spans 186–220 (LGSSSLQGHLGLSSHQGKPESSGQQGKPGSSSQQG). A compositionally biased stretch (polar residues) spans 221–285 (NLGTSGQQEK…PGSSSRQGNL (65 aa)).

The polypeptide is MARCO-like protein (Homo sapiens (Human)).